Here is an 86-residue protein sequence, read N- to C-terminus: Large ribosomal subunit protein bL31B (86 aa).

It belongs to the bacterial ribosomal protein bL31 family. Type B subfamily. As to quaternary structure, part of the 50S ribosomal subunit.

In Streptococcus pyogenes serotype M1, this protein is Large ribosomal subunit protein bL31B.